The sequence spans 340 residues: Glyceraldehyde-3-phosphate dehydrogenase (340 aa).

NAD(+)-binding positions include 11 to 12 and Gly109; that span reads TI. A disulfide bridge links Cys123 with Cys149. 138–140 serves as a coordination point for D-glyceraldehyde 3-phosphate; it reads SCN. Cys139 acts as the Nucleophile in catalysis. Arg167 contacts NAD(+). Residue 193 to 194 coordinates D-glyceraldehyde 3-phosphate; sequence HA. Residue Gln300 coordinates NAD(+).

It belongs to the glyceraldehyde-3-phosphate dehydrogenase family. In terms of assembly, homotetramer.

It is found in the cytoplasm. It carries out the reaction D-glyceraldehyde 3-phosphate + phosphate + NADP(+) = (2R)-3-phospho-glyceroyl phosphate + NADPH + H(+). The catalysed reaction is D-glyceraldehyde 3-phosphate + phosphate + NAD(+) = (2R)-3-phospho-glyceroyl phosphate + NADH + H(+). Its pathway is carbohydrate degradation; glycolysis; pyruvate from D-glyceraldehyde 3-phosphate: step 1/5. Its function is as follows. Can use both NAD and NADP as cofactors, but exhibits a marked preference for NADP. In Saccharolobus solfataricus (strain ATCC 35092 / DSM 1617 / JCM 11322 / P2) (Sulfolobus solfataricus), this protein is Glyceraldehyde-3-phosphate dehydrogenase (gap).